A 118-amino-acid chain; its full sequence is Vacuolar ATPase assembly integral membrane protein vma-21 (118 aa).

Residues 1–35 are Cytoplasmic-facing; it reads MATRRIISQEKTLLEKDDRIGSSPAASEKSNITPA. A helical membrane pass occupies residues 36 to 56; it reads VPASVIIKLLAFTFAMIVIPI. Residues 57–73 are Lumenal-facing; the sequence is SSYFLTVDRLFKGNSTY. The chain crosses the membrane as a helical span at residues 74–94; sequence AGATAAIMANVVLIGYIIVAM. Topologically, residues 95–118 are cytoplasmic; sequence AEDQSDQENEKKGGGGKGEGKKDL. The disordered stretch occupies residues 98-118; the sequence is QSDQENEKKGGGGKGEGKKDL. The segment covering 102–118 has biased composition (basic and acidic residues); the sequence is ENEKKGGGGKGEGKKDL. A Prevents secretion from ER motif is present at residues 115–118; that stretch reads KKDL.

It belongs to the VMA21 family.

The protein resides in the endoplasmic reticulum membrane. The protein localises to the endoplasmic reticulum-Golgi intermediate compartment membrane. Its subcellular location is the cytoplasmic vesicle. It is found in the COPII-coated vesicle membrane. Functionally, required for the assembly of the V0 complex of the vacuolar ATPase (V-ATPase) in the endoplasmic reticulum. This is Vacuolar ATPase assembly integral membrane protein vma-21 (vma-21) from Neurospora crassa (strain ATCC 24698 / 74-OR23-1A / CBS 708.71 / DSM 1257 / FGSC 987).